Here is a 92-residue protein sequence, read N- to C-terminus: Small ribosomal subunit protein uS19 (92 aa).

This sequence belongs to the universal ribosomal protein uS19 family.

In terms of biological role, protein S19 forms a complex with S13 that binds strongly to the 16S ribosomal RNA. This is Small ribosomal subunit protein uS19 from Polynucleobacter asymbioticus (strain DSM 18221 / CIP 109841 / QLW-P1DMWA-1) (Polynucleobacter necessarius subsp. asymbioticus).